A 426-amino-acid chain; its full sequence is Serine hydroxymethyltransferase 1 (426 aa).

(6S)-5,6,7,8-tetrahydrofolate contacts are provided by residues Leu-118 and 122–124 (GHL). At Lys-227 the chain carries N6-(pyridoxal phosphate)lysine.

This sequence belongs to the SHMT family. As to quaternary structure, homodimer. The cofactor is pyridoxal 5'-phosphate.

It is found in the cytoplasm. It carries out the reaction (6R)-5,10-methylene-5,6,7,8-tetrahydrofolate + glycine + H2O = (6S)-5,6,7,8-tetrahydrofolate + L-serine. Its pathway is one-carbon metabolism; tetrahydrofolate interconversion. The protein operates within amino-acid biosynthesis; glycine biosynthesis; glycine from L-serine: step 1/1. Its function is as follows. Catalyzes the reversible interconversion of serine and glycine with tetrahydrofolate (THF) serving as the one-carbon carrier. This reaction serves as the major source of one-carbon groups required for the biosynthesis of purines, thymidylate, methionine, and other important biomolecules. Also exhibits THF-independent aldolase activity toward beta-hydroxyamino acids, producing glycine and aldehydes, via a retro-aldol mechanism. The chain is Serine hydroxymethyltransferase 1 from Mycobacterium bovis (strain ATCC BAA-935 / AF2122/97).